We begin with the raw amino-acid sequence, 329 residues long: Glycerol-3-phosphate dehydrogenase [NAD(P)+] (329 aa).

Residues tryptophan 11, arginine 30, and lysine 103 each contribute to the NADPH site. Lysine 103, glycine 132, and serine 134 together coordinate sn-glycerol 3-phosphate. Alanine 136 contacts NADPH. Residues lysine 187, aspartate 240, serine 250, arginine 251, and asparagine 252 each contribute to the sn-glycerol 3-phosphate site. The Proton acceptor role is filled by lysine 187. NADPH is bound at residue arginine 251. Valine 275 and glutamate 277 together coordinate NADPH.

It belongs to the NAD-dependent glycerol-3-phosphate dehydrogenase family.

The protein resides in the cytoplasm. The catalysed reaction is sn-glycerol 3-phosphate + NAD(+) = dihydroxyacetone phosphate + NADH + H(+). It carries out the reaction sn-glycerol 3-phosphate + NADP(+) = dihydroxyacetone phosphate + NADPH + H(+). It functions in the pathway membrane lipid metabolism; glycerophospholipid metabolism. Functionally, catalyzes the reduction of the glycolytic intermediate dihydroxyacetone phosphate (DHAP) to sn-glycerol 3-phosphate (G3P), the key precursor for phospholipid synthesis. In Nitrosomonas eutropha (strain DSM 101675 / C91 / Nm57), this protein is Glycerol-3-phosphate dehydrogenase [NAD(P)+].